Reading from the N-terminus, the 305-residue chain is GS homeobox 2 (305 aa).

2 disordered regions span residues 115–151 and 259–305; these read DAQF…AAAA and KKEG…ISPL. The segment covering 123–140 has biased composition (basic residues); that stretch reads SHAHHHHHPPQHHHHHHQ. The segment covering 141 to 151 has biased composition (low complexity); that stretch reads PQQPGSAAAAA. Residues 203 to 262 constitute a DNA-binding region (homeobox); sequence GKRMRTAFTSTQLLELEREFSSNMYLSRLRRIEIATYLNLSEKQVKIWFQNRRVKHKKEG.

Belongs to the Antp homeobox family.

It localises to the nucleus. Transcription factor that binds 5'-CNAATTAG-3' DNA sequence and regulates the expression of numerous genes including genes important for brain development. During telencephalic development, causes ventralization of pallial progenitors and, depending on the developmental stage, specifies different neuronal fates. At early stages, necessary and sufficient to correctly specify the ventral lateral ganglionic eminence (LGE) and its major derivatives, the striatal projection neurons. At later stages, may specify LGE progenitors toward dorsal LGE fates, including olfactory bulb interneurons. This is GS homeobox 2 (Gsx2) from Mus musculus (Mouse).